The following is a 281-amino-acid chain: E2F-associated phosphoprotein (281 aa).

Met-1 is subject to N-acetylmethionine. Residues Met-1–Glu-27 form a disordered region. Positions Glu-15–Glu-27 are enriched in acidic residues. Ser-17 bears the Phosphoserine mark. Phosphothreonine is present on Thr-37. A phosphoserine mark is found at Ser-109 and Ser-111. The disordered stretch occupies residues Pro-222–Glu-245. The span at Arg-225–Arg-235 shows a compositional bias: basic residues. The span at Ser-236 to Glu-245 shows a compositional bias: basic and acidic residues.

Interacts with E2F1. The C-terminal half binds the N-terminal of E2F1. Also interacts with E2F2 and E2F3, but not E2F4.

The protein localises to the cytoplasm. The protein resides in the nucleus. Its function is as follows. May play an important role in the fine-tuning of both major E2F1 activities, the regulation of the cell-cycle and the induction of apoptosis. Promotes S-phase entry, and inhibits p14(ARP) expression. This chain is E2F-associated phosphoprotein (Eapp), found in Mus musculus (Mouse).